A 263-amino-acid chain; its full sequence is Small ribosomal subunit protein eS4 (263 aa).

In terms of domain architecture, S4 RNA-binding spans Leu42–Asp104.

The protein belongs to the eukaryotic ribosomal protein eS4 family.

This is Small ribosomal subunit protein eS4 (RPS4Y1) from Pongo pygmaeus (Bornean orangutan).